The chain runs to 383 residues: MAEMRGMLLMLLYISHSSSAICGIQKATIADKLKENLVSSTEFPWVVSIQDKQYTHLAFGCILSEFWILSTASALQHRPEVIAVVGISNMDPRKTDHREYSVNTIIPHENFDNVSMGNNIALLKTESAMHFNDLVQAICFLGKKLHKPPALKNCWVAGWNPTSATGNHMTMSILRRISVKDIEVCPLRRHQKTECASHTKEPNNVCLGEPGSPMMCQAKKLDLWILRGLLAYGGDSCPGLFLYTSVADYSDWITAKTRKAGPSLSSLHLWEKLVFELPFHESNIALTTNSFSIHTYAEWPHSYSQGQRMSTKSNKQKDAGQNFRVNRQPETSGPSKVAIQPMYYDYYGGEAGEGGAVAGQNRLHWSQERILMSFVLVFLGSGV.

Residues 1–20 (MAEMRGMLLMLLYISHSSSA) form the signal peptide. The Peptidase S1 domain maps to 21 to 258 (ICGIQKATIA…YSDWITAKTR (238 aa)). N-linked (GlcNAc...) asparagine glycosylation is present at asparagine 113. 3 disulfide bridges follow: cysteine 154-cysteine 216, cysteine 185-cysteine 195, and cysteine 206-cysteine 237. Residues 305–334 (QGQRMSTKSNKQKDAGQNFRVNRQPETSGP) are disordered. Positions 323–334 (FRVNRQPETSGP) are enriched in polar residues.

Belongs to the peptidase S1 family. Plasma kallikrein subfamily.

The protein resides in the secreted. The protein is Inactive serine protease 54 (Prss54) of Mus musculus (Mouse).